Here is a 128-residue protein sequence, read N- to C-terminus: Large ribosomal subunit protein bL17 (128 aa).

Belongs to the bacterial ribosomal protein bL17 family. Part of the 50S ribosomal subunit. Contacts protein L32.

This chain is Large ribosomal subunit protein bL17, found in Streptococcus pyogenes serotype M49 (strain NZ131).